We begin with the raw amino-acid sequence, 208 residues long: Thymidylate kinase (208 aa).

7–14 contributes to the ATP binding site; it reads GIDGSGKS.

This sequence belongs to the thymidylate kinase family.

The enzyme catalyses dTMP + ATP = dTDP + ADP. In terms of biological role, phosphorylation of dTMP to form dTDP in both de novo and salvage pathways of dTTP synthesis. The protein is Thymidylate kinase of Kosmotoga olearia (strain ATCC BAA-1733 / DSM 21960 / TBF 19.5.1).